The sequence spans 91 residues: UPF0250 protein NGK_1021 (91 aa).

Belongs to the UPF0250 family.

This is UPF0250 protein NGK_1021 from Neisseria gonorrhoeae (strain NCCP11945).